Here is a 534-residue protein sequence, read N- to C-terminus: Glycolytic genes transcriptional activator GCR2 (534 aa).

The tract at residues 29–122 (LQSVTNSPQT…TGNNASSSAT (94 aa)) is disordered. Over residues 30–43 (QSVTNSPQTTTNTP) the composition is skewed to low complexity. Residues 64 to 88 (SDSTPNIDEIITSTGSNALTKTNSD) show a composition bias toward polar residues. A compositionally biased stretch (low complexity) spans 89–122 (SANGTPNGNSSSTSAISNASNPATTGNNASSSAT). Ser151 is subject to Phosphoserine. The tract at residues 230-333 (LTQGRRKGNS…SNPGTNMLFD (104 aa)) is disordered. Positions 238–252 (NSLNTSTKGSPSDLQ) are enriched in polar residues. A compositionally biased stretch (low complexity) spans 253–279 (GINNGNNNGNNGNIGNGSNIKNYGNKN). The Nuclear localization signal motif lies at 281–288 (PNNRTKKR). Positions 295–304 (NAKNGKNNKN) are enriched in low complexity. Over residues 312-328 (ITDTSAFSNTTISNPGT) the composition is skewed to polar residues. 2 positions are modified to phosphoserine: Ser406 and Ser409. Positions 497–534 (IVQLERELELQRQETQWLRKMLIEDMGCVRSMLRDLQR) are leucine-zipper.

In terms of assembly, homodimer via the leucine-zipper domain. Forms a complex with a GCR1 homodimer.

The protein localises to the nucleus. Its function is as follows. Transcriptional activator required for the expression of glycolytic genes. Enhances the CT box-dependent transcriptional activation of a RAP1-GCR1 complex. Required for GCR1 phosphorylation. The sequence is that of Glycolytic genes transcriptional activator GCR2 (GCR2) from Saccharomyces cerevisiae (strain ATCC 204508 / S288c) (Baker's yeast).